A 213-amino-acid chain; its full sequence is Heterochromatin protein 1 (213 aa).

Disordered stretches follow at residues 1–24 (MGKKTDNPETNNASSGAEEEEEEY) and 74–151 (RKDE…TGFD). The Chromo 1 domain occupies 24 to 82 (YAVEKILDRRVRKGKVEYYLKWKGYAETENTWEPEGNLDCQDLIQQYELSRKDEANAAA). Residues 89–104 (SKKERPGSSTKVKETG) are compositionally biased toward basic and acidic residues. The span at 105 to 115 (RTSTTASNSSG) shows a compositional bias: polar residues. The 59-residue stretch at 154 to 212 (LEAEKILGASDNNGRLTFLIQFKGVDQAEMVPSTVANVKIPQMVIRFYEERLSWYSDNE) folds into the Chromo 2 domain.

It localises to the nucleus. Its function is as follows. Structural component of heterochromatin, involved in gene repression and the modification of position-effect-variegation. Recognizes and binds histone H3 tails methylated at 'Lys-9', leading to epigenetic repression. This Drosophila virilis (Fruit fly) protein is Heterochromatin protein 1 (HP1A).